We begin with the raw amino-acid sequence, 156 residues long: Arginine repressor (156 aa).

The protein belongs to the ArgR family.

Its subcellular location is the cytoplasm. Its pathway is amino-acid biosynthesis; L-arginine biosynthesis [regulation]. Functionally, regulates arginine biosynthesis genes. This is Arginine repressor from Salmonella paratyphi C (strain RKS4594).